The chain runs to 400 residues: MTQFASPVLHSLLDTDAYKLHMQQAVFHHYYDVQVAAEFRCRGDDLLGIYADAIREQVDAMQHLRLQEDEFQWLSGLPFFKPDYLNWLREFRYNPAQVCVTNDNGKLNIRLTGPWREVIMWEVPLLAVISELVHHYRSPNAGVDQALDALESKLVDFTALTANLDMSRFHLMDFGTRRRFSREVQQAIVKRLQQESWFVGTSNYDLARRLALTPMGTQAHEWFQAHQQISPDLATSQRAALAAWLNEYPDQLGIALTDCITMDAFLRDFGIEFASRYQGLRHDSGDPVAWGEKAIAHYEKLGIDPLTKTLVFSDNLDLPKAVELYRHFASRVQLSFGIGTRLTCDIPQVKPLNIVIKLVECNGKPVAKLSDSPGKTICHDKAFVRALRKAFDLPQVRKAS.

Position 220 is a phosphohistidine; by autocatalysis (H220).

It belongs to the NAPRTase family. Post-translationally, transiently phosphorylated on a His residue during the reaction cycle. Phosphorylation strongly increases the affinity for substrates and increases the rate of nicotinate D-ribonucleotide production. Dephosphorylation regenerates the low-affinity form of the enzyme, leading to product release.

It carries out the reaction nicotinate + 5-phospho-alpha-D-ribose 1-diphosphate + ATP + H2O = nicotinate beta-D-ribonucleotide + ADP + phosphate + diphosphate. It functions in the pathway cofactor biosynthesis; NAD(+) biosynthesis; nicotinate D-ribonucleotide from nicotinate: step 1/1. Functionally, catalyzes the synthesis of beta-nicotinate D-ribonucleotide from nicotinate and 5-phospho-D-ribose 1-phosphate at the expense of ATP. The sequence is that of Nicotinate phosphoribosyltransferase from Salmonella dublin (strain CT_02021853).